Consider the following 410-residue polypeptide: Cytosolic isocitrate dehydrogenase [NADP] (410 aa).

NADP(+) contacts are provided by residues 77–79 (TIT) and Arg84. Thr79 contributes to the substrate binding site. Substrate contacts are provided by residues 96–102 (SPNGTIR), Arg111, and Arg134. NADP(+) is bound at residue Lys260. Mn(2+) contacts are provided by Asp275 and Asp279. NADP(+) contacts are provided by residues 310–315 (GTVTRH) and Asn328.

The protein belongs to the isocitrate and isopropylmalate dehydrogenases family. It depends on Mg(2+) as a cofactor. Mn(2+) serves as cofactor.

It localises to the cytoplasm. Its subcellular location is the cytosol. The catalysed reaction is D-threo-isocitrate + NADP(+) = 2-oxoglutarate + CO2 + NADPH. May supply 2-oxoglutarate for amino acid biosynthesis and ammonia assimilation via the glutamine synthetase/glutamate synthase (GS/GOGAT) pathway. May be involved in the production of NADPH to promote redox signaling or homeostasis in response to oxidative stress, or redox signaling linked to defense responses. The chain is Cytosolic isocitrate dehydrogenase [NADP] from Arabidopsis thaliana (Mouse-ear cress).